The primary structure comprises 178 residues: MEIINWLSLAMIPIIIAGILLYGTIKKVPTYESFVEGGKEGIEIAFSIIPYLVGMLVAITVFRSSGALDFIMDLLKPAFSAIGIPAEVVPLALIRPISGTAALGMTTDLIAVYGPDSFIGRLASVMQGSTDTTLYVLTVYFGAVGIKKMGDALKVGLLADLIGVVASIIIVTLLFGSA.

3 consecutive transmembrane segments (helical) span residues 3-23 (IINW…LLYG), 42-62 (IEIA…ITVF), and 155-175 (VGLL…TLLF).

It belongs to the SpmB family.

Its subcellular location is the cell membrane. Functionally, involved in spore core dehydration; might be involved in the transport of something into or out of the forespore or could be required for some modification of the cortex peptidoglycan structure. This chain is Spore maturation protein B (spmB), found in Bacillus subtilis (strain 168).